The sequence spans 452 residues: Bis(5'-adenosyl)-triphosphatase enpp4 (452 aa).

A signal peptide spans 1 to 19 (MFGRVFIVAVLYCITICKG). Residues 20–407 (EDPTNSSTPK…NQWCIQVSEA (388 aa)) are Extracellular-facing. An N-linked (GlcNAc...) asparagine glycan is attached at N24. D36 and T72 together coordinate Zn(2+). The AMP-threonine intermediate role is filled by T72. Residue N93 participates in substrate binding. N107 carries an N-linked (GlcNAc...) asparagine glycan. Residue Y154 coordinates substrate. Residues N155 and N175 are each glycosylated (N-linked (GlcNAc...) asparagine). Zn(2+)-binding residues include D189 and H193. D189 is a substrate binding site. N-linked (GlcNAc...) asparagine glycosylation is present at N202. 2 residues coordinate Zn(2+): D237 and H238. C254 and C287 are joined by a disulfide. N-linked (GlcNAc...) asparagine glycosylation is found at N259 and N327. Residue H336 participates in Zn(2+) binding. Residue N386 is glycosylated (N-linked (GlcNAc...) asparagine). C394 and C401 are joined by a disulfide. The chain crosses the membrane as a helical span at residues 408–428 (IGIVIGAIMVLTTLTCIIIML). At 429-452 (KKKMPSARPFSRLQFQDDDDPLIG) the chain is on the cytoplasmic side.

Belongs to the nucleotide pyrophosphatase/phosphodiesterase family. Zn(2+) is required as a cofactor.

It is found in the cell membrane. The catalysed reaction is P(1),P(3)-bis(5'-adenosyl) triphosphate + H2O = AMP + ADP + 2 H(+). Hydrolyzes extracellular Ap3A into AMP and ADP, and Ap4A into AMP and ATP. Ap3A and Ap4A are diadenosine polyphosphates thought to induce proliferation of vascular smooth muscle cells. Acts as a procoagulant, mediating platelet aggregation at the site of nascent thrombus via release of ADP from Ap3A and activation of ADP receptors. The sequence is that of Bis(5'-adenosyl)-triphosphatase enpp4 (enpp4) from Xenopus laevis (African clawed frog).